A 365-amino-acid chain; its full sequence is Chorismate synthase (365 aa).

The segment at 41–60 is disordered; it reads MQHDLDRRRPGTSRYTTARR. Residues Arg48 and Arg54 each contribute to the NADP(+) site. FMN contacts are provided by residues 125–127, 238–239, Gly278, 293–297, and Arg319; these read RSS, NA, and KPTSS.

The protein belongs to the chorismate synthase family. Homotetramer. The cofactor is FMNH2.

The enzyme catalyses 5-O-(1-carboxyvinyl)-3-phosphoshikimate = chorismate + phosphate. Its pathway is metabolic intermediate biosynthesis; chorismate biosynthesis; chorismate from D-erythrose 4-phosphate and phosphoenolpyruvate: step 7/7. In terms of biological role, catalyzes the anti-1,4-elimination of the C-3 phosphate and the C-6 proR hydrogen from 5-enolpyruvylshikimate-3-phosphate (EPSP) to yield chorismate, which is the branch point compound that serves as the starting substrate for the three terminal pathways of aromatic amino acid biosynthesis. This reaction introduces a second double bond into the aromatic ring system. The sequence is that of Chorismate synthase from Shewanella amazonensis (strain ATCC BAA-1098 / SB2B).